Reading from the N-terminus, the 373-residue chain is tRNA-specific 2-thiouridylase MnmA (373 aa).

ATP is bound by residues 12–19 and Met38; that span reads GMSGGVDS. Residues 98–100 are interaction with target base in tRNA; it reads NPD. The active-site Nucleophile is the Cys103. A disulfide bond links Cys103 and Cys200. Gly127 lines the ATP pocket. Residues 150–152 are interaction with tRNA; that stretch reads KDQ. Cys200 (cysteine persulfide intermediate) is an active-site residue. Residues 312-313 are interaction with tRNA; it reads RY.

The protein belongs to the MnmA/TRMU family.

Its subcellular location is the cytoplasm. The enzyme catalyses S-sulfanyl-L-cysteinyl-[protein] + uridine(34) in tRNA + AH2 + ATP = 2-thiouridine(34) in tRNA + L-cysteinyl-[protein] + A + AMP + diphosphate + H(+). Catalyzes the 2-thiolation of uridine at the wobble position (U34) of tRNA, leading to the formation of s(2)U34. This chain is tRNA-specific 2-thiouridylase MnmA, found in Streptococcus pyogenes serotype M6 (strain ATCC BAA-946 / MGAS10394).